The sequence spans 196 residues: ATP-dependent Clp protease proteolytic subunit (196 aa).

The active-site Nucleophile is the Ser-99. The active site involves His-124.

It belongs to the peptidase S14 family. As to quaternary structure, fourteen ClpP subunits assemble into 2 heptameric rings which stack back to back to give a disk-like structure with a central cavity, resembling the structure of eukaryotic proteasomes.

The protein localises to the cytoplasm. The enzyme catalyses Hydrolysis of proteins to small peptides in the presence of ATP and magnesium. alpha-casein is the usual test substrate. In the absence of ATP, only oligopeptides shorter than five residues are hydrolyzed (such as succinyl-Leu-Tyr-|-NHMec, and Leu-Tyr-Leu-|-Tyr-Trp, in which cleavage of the -Tyr-|-Leu- and -Tyr-|-Trp bonds also occurs).. Functionally, cleaves peptides in various proteins in a process that requires ATP hydrolysis. Has a chymotrypsin-like activity. Plays a major role in the degradation of misfolded proteins. The polypeptide is ATP-dependent Clp protease proteolytic subunit (Helicobacter pylori (strain ATCC 700392 / 26695) (Campylobacter pylori)).